The following is a 252-amino-acid chain: Chitooligosaccharide deacetylase (252 aa).

The Mg(2+) site is built by His-61 and His-125.

Belongs to the YdjC deacetylase family. ChbG subfamily. As to quaternary structure, homodimer. The cofactor is Mg(2+).

It localises to the cytoplasm. The enzyme catalyses N,N'-diacetylchitobiose + H2O = N-acetyl-beta-D-glucosaminyl-(1-&gt;4)-D-glucosamine + acetate. It carries out the reaction diacetylchitobiose-6'-phosphate + H2O = N'-monoacetylchitobiose-6'-phosphate + acetate. The protein operates within glycan degradation; chitin degradation. Its function is as follows. Involved in the degradation of chitin. ChbG is essential for growth on the acetylated chitooligosaccharides chitobiose and chitotriose but is dispensable for growth on cellobiose and chitosan dimer, the deacetylated form of chitobiose. Deacetylation of chitobiose-6-P and chitotriose-6-P is necessary for both the activation of the chb promoter by the regulatory protein ChbR and the hydrolysis of phosphorylated beta-glucosides by the phospho-beta-glucosidase ChbF. Catalyzes the removal of only one acetyl group from chitobiose-6-P to yield monoacetylchitobiose-6-P, the inducer of ChbR and the substrate of ChbF. The sequence is that of Chitooligosaccharide deacetylase from Escherichia coli O127:H6 (strain E2348/69 / EPEC).